A 533-amino-acid chain; its full sequence is Probable anion transporter 4, chloroplastic (533 aa).

The next 12 helical transmembrane spans lie at 117-137 (MLAL…VAIV), 152-172 (IVQS…GTLV), 179-199 (VVMA…PWAA), 203-223 (LWAL…ALPC), 243-263 (IAMA…PILM), 267-287 (GIYG…LVWL), 342-362 (VIVA…WMPI), 376-396 (AWFS…AGFW), 417-437 (IGFI…QPLV), 438-458 (ASAW…GFLI), 474-494 (MCLT…GFFV), and 502-522 (GFIL…NIYA).

The protein belongs to the major facilitator superfamily. Sodium/anion cotransporter (TC 2.A.1.14) family. In terms of tissue distribution, expressed in leaf veins and root tips.

The protein resides in the plastid. Its subcellular location is the chloroplast membrane. Inorganic phosphate and probable anion transporter. The sequence is that of Probable anion transporter 4, chloroplastic (ANTR4) from Arabidopsis thaliana (Mouse-ear cress).